Reading from the N-terminus, the 396-residue chain is Elongation factor Tu (396 aa).

One can recognise a tr-type G domain in the interval lysine 10–glutamate 206. The interval glycine 19–threonine 26 is G1. Residue glycine 19–threonine 26 participates in GTP binding. Threonine 26 contacts Mg(2+). Residues glycine 60–asparagine 64 are G2. The segment at aspartate 81–glycine 84 is G3. Residues aspartate 81–histidine 85 and asparagine 136–aspartate 139 contribute to the GTP site. Positions asparagine 136–aspartate 139 are G4. The tract at residues serine 174–lysine 176 is G5.

It belongs to the TRAFAC class translation factor GTPase superfamily. Classic translation factor GTPase family. EF-Tu/EF-1A subfamily. Monomer.

It is found in the cytoplasm. It catalyses the reaction GTP + H2O = GDP + phosphate + H(+). In terms of biological role, GTP hydrolase that promotes the GTP-dependent binding of aminoacyl-tRNA to the A-site of ribosomes during protein biosynthesis. The polypeptide is Elongation factor Tu (Thiomonas delicata (Thiomonas cuprina)).